Here is a 75-residue protein sequence, read N- to C-terminus: Small ribosomal subunit protein bS18 (75 aa).

It belongs to the bacterial ribosomal protein bS18 family. Part of the 30S ribosomal subunit. Forms a tight heterodimer with protein bS6.

In terms of biological role, binds as a heterodimer with protein bS6 to the central domain of the 16S rRNA, where it helps stabilize the platform of the 30S subunit. The polypeptide is Small ribosomal subunit protein bS18 (Thermotoga maritima (strain ATCC 43589 / DSM 3109 / JCM 10099 / NBRC 100826 / MSB8)).